We begin with the raw amino-acid sequence, 162 residues long: NADH-quinone oxidoreductase subunit I 2 (162 aa).

4Fe-4S ferredoxin-type domains are found at residues 53–83 and 93–122; these read LRRYPNGEERCIACKLCEAVCPALAITIDSE and TRYDIDLFKCIYCGFCEESCPVDSIVETRI. Positions 63, 66, 69, 73, 102, 105, 108, and 112 each coordinate [4Fe-4S] cluster.

Belongs to the complex I 23 kDa subunit family. As to quaternary structure, NDH-1 is composed of 14 different subunits. Subunits NuoA, H, J, K, L, M, N constitute the membrane sector of the complex. The cofactor is [4Fe-4S] cluster.

The protein localises to the cell inner membrane. The enzyme catalyses a quinone + NADH + 5 H(+)(in) = a quinol + NAD(+) + 4 H(+)(out). Its function is as follows. NDH-1 shuttles electrons from NADH, via FMN and iron-sulfur (Fe-S) centers, to quinones in the respiratory chain. The immediate electron acceptor for the enzyme in this species is believed to be ubiquinone. Couples the redox reaction to proton translocation (for every two electrons transferred, four hydrogen ions are translocated across the cytoplasmic membrane), and thus conserves the redox energy in a proton gradient. This is NADH-quinone oxidoreductase subunit I 2 from Nitrosococcus oceani (strain ATCC 19707 / BCRC 17464 / JCM 30415 / NCIMB 11848 / C-107).